Here is a 486-residue protein sequence, read N- to C-terminus: Cardiolipin synthase A (486 aa).

The next 2 helical transmembrane spans lie at 3–23 (TFYT…IAGV) and 38–58 (MAWL…YLSF). 2 consecutive PLD phosphodiesterase domains span residues 219–246 (MDLR…VDPR) and 399–426 (EGGL…DMRS). Catalysis depends on residues His-224, Lys-226, Asp-231, His-404, Lys-406, and Asp-411.

Belongs to the phospholipase D family. Cardiolipin synthase subfamily. ClsA sub-subfamily.

The protein resides in the cell inner membrane. It catalyses the reaction 2 a 1,2-diacyl-sn-glycero-3-phospho-(1'-sn-glycerol) = a cardiolipin + glycerol. Its function is as follows. Catalyzes the reversible phosphatidyl group transfer from one phosphatidylglycerol molecule to another to form cardiolipin (CL) (diphosphatidylglycerol) and glycerol. This Klebsiella pneumoniae (strain 342) protein is Cardiolipin synthase A.